Consider the following 208-residue polypeptide: MLKLAIPKGRLEEKVMTYLKKTGVIFERESSILREGKDIVCFMVRPFDVPTYLVHGVADIGFCGTDVLLEKETSLIQPFFIPTNISRMVLAGPKGRGIPEGEKRIATKFPNVTQRYCESKGWHCRIIPLKGSVELAPIAGLSDLIVDITETGRTLKENNLEILDEIFVIRTHVVVNPVSYRTKREEVVSFLEKLQEVIEHDSNEQSRG.

It belongs to the ATP phosphoribosyltransferase family. Short subfamily. Heteromultimer composed of HisG and HisZ subunits.

Its subcellular location is the cytoplasm. It carries out the reaction 1-(5-phospho-beta-D-ribosyl)-ATP + diphosphate = 5-phospho-alpha-D-ribose 1-diphosphate + ATP. It functions in the pathway amino-acid biosynthesis; L-histidine biosynthesis; L-histidine from 5-phospho-alpha-D-ribose 1-diphosphate: step 1/9. Catalyzes the condensation of ATP and 5-phosphoribose 1-diphosphate to form N'-(5'-phosphoribosyl)-ATP (PR-ATP). Has a crucial role in the pathway because the rate of histidine biosynthesis seems to be controlled primarily by regulation of HisG enzymatic activity. The protein is ATP phosphoribosyltransferase (hisG) of Thermotoga maritima (strain ATCC 43589 / DSM 3109 / JCM 10099 / NBRC 100826 / MSB8).